Consider the following 387-residue polypeptide: Palmitoyltransferase ZDHHC16A (387 aa).

2 helical membrane-spanning segments follow: residues 73 to 93 (WFGMVFVFLVVALTSSVVFIA) and 106 to 126 (SPGWMIWHICYGHWNLVMIVF). The DHHC domain maps to 150 to 200 (SVCKKCIIPKPARSHHCGICKTCILKMDHHCPWLNNCVGHFNHRYFFSFCL). Cysteine 180 serves as the catalytic S-palmitoyl cysteine intermediate. 3 helical membrane-spanning segments follow: residues 198 to 218 (FCLFLTLGCMYCSVSGRHLFI), 236 to 256 (GVPVTGIGLLIGIVPSAGVAG), and 281 to 301 (VIYMWVLTSTVSVALGALTLW).

This sequence belongs to the DHHC palmitoyltransferase family. As to expression, expressed in the central nervous system (CNS). Expressed in the developing forebrain, and especially in the telencephalon.

The protein localises to the endoplasmic reticulum membrane. It carries out the reaction L-cysteinyl-[protein] + hexadecanoyl-CoA = S-hexadecanoyl-L-cysteinyl-[protein] + CoA. Its function is as follows. Palmitoyl acyltransferase that mediates palmitoylation of proteins and is required during embryonic heart development. Involved in the proliferation of neural stem cells by regulating the FGF/ERK pathway. Involved in the proliferation of neural stem cells by regulating the FGF/ERK pathway. The chain is Palmitoyltransferase ZDHHC16A from Danio rerio (Zebrafish).